Reading from the N-terminus, the 310-residue chain is MINPIYLIIADLLDRYIGEPPEKLHPVVFIGNFVKFLEKVFPSTHSVEKLKDLVFGFITVFLTVFTVFLIFFTLELILNLISNYYIKLFSYSLILSFSIGHKSLLEFSKAPIKYIMSGDIKSARKSVQHIVSRDTSTLDEKHVISAAVESSSENITDSIIAPLIYAAIFGLSGAFIYRAVNTMDAMLGYKNEKYRYYGKTAAYLDDILNFIPSRIAGILLIISAPFYGGKIVPAIYGYLKEGFKTPSPNSGYTMAVIANSLSMELEKIGCYKLGKGEITVLKAVNSLKAVDYSVLLFLVIYMVLYFNLIY.

The next 5 helical transmembrane spans lie at 53–73, 80–100, 157–177, 215–235, and 289–309; these read LVFG…IFFT, LISN…FSIG, DSII…AFIY, IAGI…VPAI, and AVDY…FNLI.

Belongs to the CobD/CbiB family.

The protein resides in the cell membrane. The protein operates within cofactor biosynthesis; adenosylcobalamin biosynthesis. Functionally, converts cobyric acid to cobinamide by the addition of aminopropanol on the F carboxylic group. This Methanococcus vannielii (strain ATCC 35089 / DSM 1224 / JCM 13029 / OCM 148 / SB) protein is Probable cobalamin biosynthesis protein CobD.